We begin with the raw amino-acid sequence, 682 residues long: DNA-directed RNA polymerase subunit beta' (682 aa).

Zn(2+) is bound by residues Cys69, Cys71, Cys87, and Cys90. Residues Asp489, Asp491, and Asp493 each coordinate Mg(2+).

It belongs to the RNA polymerase beta' chain family. RpoC1 subfamily. As to quaternary structure, in plastids the minimal PEP RNA polymerase catalytic core is composed of four subunits: alpha, beta, beta', and beta''. When a (nuclear-encoded) sigma factor is associated with the core the holoenzyme is formed, which can initiate transcription. The cofactor is Mg(2+). Requires Zn(2+) as cofactor.

The protein resides in the plastid. It is found in the chloroplast. The enzyme catalyses RNA(n) + a ribonucleoside 5'-triphosphate = RNA(n+1) + diphosphate. Functionally, DNA-dependent RNA polymerase catalyzes the transcription of DNA into RNA using the four ribonucleoside triphosphates as substrates. In Platanus occidentalis (Sycamore), this protein is DNA-directed RNA polymerase subunit beta'.